A 592-amino-acid chain; its full sequence is Cell division protein FtsZ (592 aa).

GTP-binding positions include 24 to 28, 111 to 113, Glu142, Arg146, and Asp190; these read GGGGN and GTG. A disordered region spans residues 333–362; sequence KFQKSVSSVRKNDSGINQTASHPQSSQLRS.

The protein belongs to the FtsZ family. Homodimer. Polymerizes to form a dynamic ring structure in a strictly GTP-dependent manner. Interacts directly with several other division proteins.

It localises to the cytoplasm. Essential cell division protein that forms a contractile ring structure (Z ring) at the future cell division site. The regulation of the ring assembly controls the timing and the location of cell division. One of the functions of the FtsZ ring is to recruit other cell division proteins to the septum to produce a new cell wall between the dividing cells. Binds GTP and shows GTPase activity. The chain is Cell division protein FtsZ from Bartonella bacilliformis.